Reading from the N-terminus, the 402-residue chain is MLENIQRSWFEHYMVPCFSPAKFIPVRAKGSKVWDQDGKEYIDFAGGIAVNSLGHAHPELKDELIYQIDKIWHIGNGYTNEPVLKLAKRLVENTFADKAFFCNSGAEANEAALKLARKYAADKYGKNKNEIISFKDSFHGRTLFTVTVGGQPKYSQDYAPLPQEITHLPYNNLSAIREHISENTCAVIVEPIIGEGGVIPADPAFLQELRTLCDRFQALLIFDEIQTGVGRTGYLYAYQEYGVEPDILTSAKGLGGGFPIGAMLTKQHIAAVFQPGTHGTTFGGNPLATAVANKVLSIVNQAELLTGVLQRHDYFMDKLSKLNQRYQIFSCLRGKGLLLGAELDKAWQGKAKQLTNLAAEEGLIALIAGPDVLRFAPALNIEFADIDEGLVRLESAIMRFVG.

Residue Lys252 is modified to N6-(pyridoxal phosphate)lysine.

This sequence belongs to the class-III pyridoxal-phosphate-dependent aminotransferase family. AstC subfamily. Pyridoxal 5'-phosphate serves as cofactor.

It carries out the reaction N(2)-succinyl-L-ornithine + 2-oxoglutarate = N-succinyl-L-glutamate 5-semialdehyde + L-glutamate. It participates in amino-acid degradation; L-arginine degradation via AST pathway; L-glutamate and succinate from L-arginine: step 3/5. Its function is as follows. Catalyzes the transamination of N(2)-succinylornithine and alpha-ketoglutarate into N(2)-succinylglutamate semialdehyde and glutamate. Can also act as an acetylornithine aminotransferase. The polypeptide is Succinylornithine transaminase (Photorhabdus laumondii subsp. laumondii (strain DSM 15139 / CIP 105565 / TT01) (Photorhabdus luminescens subsp. laumondii)).